The primary structure comprises 518 residues: Uronate isomerase (518 aa).

It belongs to the metallo-dependent hydrolases superfamily. Uronate isomerase family.

It catalyses the reaction D-glucuronate = D-fructuronate. The catalysed reaction is aldehydo-D-galacturonate = keto-D-tagaturonate. It participates in carbohydrate metabolism; pentose and glucuronate interconversion. In Corynebacterium glutamicum (strain ATCC 13032 / DSM 20300 / JCM 1318 / BCRC 11384 / CCUG 27702 / LMG 3730 / NBRC 12168 / NCIMB 10025 / NRRL B-2784 / 534), this protein is Uronate isomerase (uxaC).